The sequence spans 471 residues: 5-hydroxytryptamine receptor 2A (471 aa).

Residues 1–80 (MEILCEDNIS…LQEKNWSALL (80 aa)) are Extracellular-facing. N-linked (GlcNAc...) asparagine glycans are attached at residues N8, N38, N44, N51, and N54. A helical transmembrane segment spans residues 81–97 (TTVVIILTIAGNILVIM). Residues 98–111 (AVSLEKKLQNATNY) lie on the Cytoplasmic side of the membrane. A helical membrane pass occupies residues 112 to 137 (FLMSLAIADMLLGFLVMPVSMLTILY). Residues 138–146 (GYRWPLPSK) are Extracellular-facing. A helical transmembrane segment spans residues 147–171 (LCAIWIYLDVLFSTASIMHLCAISL). The cysteines at positions 148 and 227 are disulfide-linked. D155 lines the serotonin pocket. The DRY motif; important for ligand-induced conformation changes motif lies at 172 to 174 (DRY). Residues 172–191 (DRYVAIQNPIHHSRFNSRTK) lie on the Cytoplasmic side of the membrane. A helical membrane pass occupies residues 192 to 215 (AFLKIIAVWTISVGISMPIPVFGL). Topologically, residues 216-232 (QDDSKVFKEGSCLLADD) are extracellular. The helical transmembrane segment at 233 to 258 (NFVLIGSFVAFFIPLTIMVITYFLTI) threads the bilayer. The Cytoplasmic portion of the chain corresponds to 259 to 322 (KSLQKEATLC…QSISNEQKAC (64 aa)). Phosphoserine is present on S280. The chain crosses the membrane as a helical span at residues 323–348 (KVLGIVFFLFVVMWCPFFITNIMAVI). N343 is a serotonin binding site. An intrachain disulfide couples C349 to C353. At 349–356 (CKESCNEN) the chain is on the extracellular side. Residues 357–382 (VIGALLNVFVWIGYLSSAVNPLVYTL) traverse the membrane as a helical segment. Positions 376–380 (NPLVY) match the NPxxY motif; important for ligand-induced conformation changes and signaling motif. The Cytoplasmic portion of the chain corresponds to 383 to 471 (FNKTYRSAFS…ETVNEKVSCV (89 aa)). The PDZ-binding signature appears at 469–471 (SCV).

The protein belongs to the G-protein coupled receptor 1 family. In terms of assembly, interacts (via C-terminus) with MPDZ and PATJ. May interact (via C-terminus) with MPP3, PRDX6, DLG4, DLG1, CASK, APBA1 and MAGI2. Interacts with GRM2 and DRD2; this may affect signaling. In terms of tissue distribution, detected in adult intestine, especially in mucosal epithelium, longitudinal and circular layers of muscularis externa and myenteric plexuses. Highly expressed in Paneth cells, and detected at lower levels in enterocytes (at protein level). Detected in brain cortex.

It is found in the cell membrane. It localises to the cell projection. The protein resides in the axon. Its subcellular location is the cytoplasmic vesicle. The protein localises to the membrane. It is found in the caveola. It localises to the dendrite. The protein resides in the presynapse. Its activity is regulated as follows. G-protein coupled receptor activity is regulated by lipids: oleamide increases HTR2A-mediated activity. G-protein coupled receptor for 5-hydroxytryptamine (serotonin). Also functions as a receptor for various drugs and psychoactive substances, including mescaline, psilocybin, 1-(2,5-dimethoxy-4-iodophenyl)-2-aminopropane (DOI) and lysergic acid diethylamide (LSD). Ligand binding causes a conformation change that triggers signaling via guanine nucleotide-binding proteins (G proteins) and modulates the activity of downstream effectors. HTR2A is coupled to G(q)/G(11) G alpha proteins and activates phospholipase C-beta, releasing diacylglycerol (DAG) and inositol 1,4,5-trisphosphate (IP3) second messengers that modulate the activity of phosphatidylinositol 3-kinase and promote the release of Ca(2+) ions from intracellular stores, respectively. Beta-arrestin family members inhibit signaling via G proteins and mediate activation of alternative signaling pathways. Affects neural activity, perception, cognition and mood. Plays a role in the regulation of behavior, including responses to anxiogenic situations and psychoactive substances. Plays a role in intestinal smooth muscle contraction, and may play a role in arterial vasoconstriction. This Rattus norvegicus (Rat) protein is 5-hydroxytryptamine receptor 2A (Htr2a).